The following is a 333-amino-acid chain: Cathepsin M (333 aa).

Residues 1–15 form the signal peptide; the sequence is MTSAIFLAMLCLGMA. Residues 16-113 constitute a propeptide, activation peptide; that stretch reads LPSPAPDPIL…KSVQKRLSVN (98 aa). Cystine bridges form between cysteine 135–cysteine 178 and cysteine 169–cysteine 211. The active site involves cysteine 138. Asparagine 217, asparagine 221, and asparagine 268 each carry an N-linked (GlcNAc...) asparagine glycan. The cysteines at positions 269 and 322 are disulfide-linked. Catalysis depends on residues histidine 276 and asparagine 300.

The protein belongs to the peptidase C1 family. In terms of tissue distribution, placenta.

The protein localises to the lysosome. The polypeptide is Cathepsin M (Ctsm) (Mus musculus (Mouse)).